A 362-amino-acid polypeptide reads, in one-letter code: Aminomethyltransferase (362 aa).

This sequence belongs to the GcvT family. In terms of assembly, the glycine cleavage system is composed of four proteins: P, T, L and H.

It catalyses the reaction N(6)-[(R)-S(8)-aminomethyldihydrolipoyl]-L-lysyl-[protein] + (6S)-5,6,7,8-tetrahydrofolate = N(6)-[(R)-dihydrolipoyl]-L-lysyl-[protein] + (6R)-5,10-methylene-5,6,7,8-tetrahydrofolate + NH4(+). In terms of biological role, the glycine cleavage system catalyzes the degradation of glycine. This Listeria monocytogenes serotype 4b (strain CLIP80459) protein is Aminomethyltransferase.